Here is a 248-residue protein sequence, read N- to C-terminus: Acetylglutamate kinase (248 aa).

Substrate is bound by residues 41 to 42 (GG), Arg63, and Asn155.

It belongs to the acetylglutamate kinase family. ArgB subfamily.

Its subcellular location is the cytoplasm. The catalysed reaction is N-acetyl-L-glutamate + ATP = N-acetyl-L-glutamyl 5-phosphate + ADP. Its pathway is amino-acid biosynthesis; L-arginine biosynthesis; N(2)-acetyl-L-ornithine from L-glutamate: step 2/4. Functionally, catalyzes the ATP-dependent phosphorylation of N-acetyl-L-glutamate. The protein is Acetylglutamate kinase of Lactiplantibacillus plantarum (strain ATCC BAA-793 / NCIMB 8826 / WCFS1) (Lactobacillus plantarum).